Here is a 375-residue protein sequence, read N- to C-terminus: Succinyl-diaminopimelate desuccinylase (375 aa).

H66 lines the Zn(2+) pocket. D68 is an active-site residue. Residue D99 participates in Zn(2+) binding. The active-site Proton acceptor is the E133. The Zn(2+) site is built by E134, E162, and H348.

This sequence belongs to the peptidase M20A family. DapE subfamily. As to quaternary structure, homodimer. The cofactor is Zn(2+). Co(2+) serves as cofactor.

The catalysed reaction is N-succinyl-(2S,6S)-2,6-diaminopimelate + H2O = (2S,6S)-2,6-diaminopimelate + succinate. It functions in the pathway amino-acid biosynthesis; L-lysine biosynthesis via DAP pathway; LL-2,6-diaminopimelate from (S)-tetrahydrodipicolinate (succinylase route): step 3/3. Catalyzes the hydrolysis of N-succinyl-L,L-diaminopimelic acid (SDAP), forming succinate and LL-2,6-diaminopimelate (DAP), an intermediate involved in the bacterial biosynthesis of lysine and meso-diaminopimelic acid, an essential component of bacterial cell walls. The protein is Succinyl-diaminopimelate desuccinylase of Pectobacterium atrosepticum (strain SCRI 1043 / ATCC BAA-672) (Erwinia carotovora subsp. atroseptica).